The following is a 124-amino-acid chain: MTKHYKIIGLRILSWVITITGLIIFIGNVHEYGLHFTYNQVLAIIIVILLLVTTMYFSVTPKLLKWNEKYELVWWLCYLCAPIYLFLTNLYNSTDLGYTIKFWLFFGGGAALIIISKYILKNKK.

This is an uncharacterized protein from Lactobacillus acidophilus.